Consider the following 118-residue polypeptide: Small ribosomal subunit protein uS13 (118 aa).

The disordered stretch occupies residues 91–118 (HRRGLPVRGQRTKTNARTRKGPRKPIKK).

The protein belongs to the universal ribosomal protein uS13 family. In terms of assembly, part of the 30S ribosomal subunit. Forms a loose heterodimer with protein S19. Forms two bridges to the 50S subunit in the 70S ribosome.

Functionally, located at the top of the head of the 30S subunit, it contacts several helices of the 16S rRNA. In the 70S ribosome it contacts the 23S rRNA (bridge B1a) and protein L5 of the 50S subunit (bridge B1b), connecting the 2 subunits; these bridges are implicated in subunit movement. Contacts the tRNAs in the A and P-sites. This is Small ribosomal subunit protein uS13 from Serratia proteamaculans (strain 568).